A 313-amino-acid polypeptide reads, in one-letter code: Porphobilinogen deaminase (313 aa).

Cysteine 242 carries the S-(dipyrrolylmethanemethyl)cysteine modification.

Belongs to the HMBS family. Monomer. Dipyrromethane is required as a cofactor.

The enzyme catalyses 4 porphobilinogen + H2O = hydroxymethylbilane + 4 NH4(+). It functions in the pathway porphyrin-containing compound metabolism; protoporphyrin-IX biosynthesis; coproporphyrinogen-III from 5-aminolevulinate: step 2/4. Functionally, tetrapolymerization of the monopyrrole PBG into the hydroxymethylbilane pre-uroporphyrinogen in several discrete steps. This is Porphobilinogen deaminase from Pseudomonas syringae pv. tomato (strain ATCC BAA-871 / DC3000).